Here is a 358-residue protein sequence, read N- to C-terminus: Alanine racemase (358 aa).

Lysine 34 acts as the Proton acceptor; specific for D-alanine in catalysis. Residue lysine 34 is modified to N6-(pyridoxal phosphate)lysine. Position 129 (arginine 129) interacts with substrate. Tyrosine 254 functions as the Proton acceptor; specific for L-alanine in the catalytic mechanism. Methionine 302 lines the substrate pocket.

Belongs to the alanine racemase family. The cofactor is pyridoxal 5'-phosphate.

The enzyme catalyses L-alanine = D-alanine. It participates in amino-acid biosynthesis; D-alanine biosynthesis; D-alanine from L-alanine: step 1/1. Catalyzes the interconversion of L-alanine and D-alanine. May also act on other amino acids. The polypeptide is Alanine racemase (alr) (Aliivibrio salmonicida (strain LFI1238) (Vibrio salmonicida (strain LFI1238))).